A 407-amino-acid chain; its full sequence is Na(+)-translocating NADH-quinone reductase subunit F (407 aa).

Residues 6-26 traverse the membrane as a helical segment; sequence IFLAIGMFTAIVLGLVAIILV. Residues 35 to 127 enclose the 2Fe-2S ferredoxin-type domain; the sequence is GDVTIQINGE…DMQIRVPEEV (93 aa). Cysteine 70, cysteine 76, cysteine 79, and cysteine 111 together coordinate [2Fe-2S] cluster. The region spanning 130-269 is the FAD-binding FR-type domain; that stretch reads VKKWECTVES…YGPFGEFFAK (140 aa). Residues 272–389 form a catalytic region; the sequence is EAEMVFIGGG…PMMNAAVIKM (118 aa).

Belongs to the NqrF family. Composed of six subunits; NqrA, NqrB, NqrC, NqrD, NqrE and NqrF. The cofactor is [2Fe-2S] cluster. Requires FAD as cofactor.

It localises to the cell inner membrane. The enzyme catalyses a ubiquinone + n Na(+)(in) + NADH + H(+) = a ubiquinol + n Na(+)(out) + NAD(+). Functionally, NQR complex catalyzes the reduction of ubiquinone-1 to ubiquinol by two successive reactions, coupled with the transport of Na(+) ions from the cytoplasm to the periplasm. The first step is catalyzed by NqrF, which accepts electrons from NADH and reduces ubiquinone-1 to ubisemiquinone by a one-electron transfer pathway. This chain is Na(+)-translocating NADH-quinone reductase subunit F, found in Pseudomonas aeruginosa (strain ATCC 15692 / DSM 22644 / CIP 104116 / JCM 14847 / LMG 12228 / 1C / PRS 101 / PAO1).